We begin with the raw amino-acid sequence, 320 residues long: Dimethyladenosine transferase (320 aa).

S-adenosyl-L-methionine-binding residues include His-38, Leu-40, Gly-65, Glu-86, Asp-114, and Asn-129.

Belongs to the class I-like SAM-binding methyltransferase superfamily. rRNA adenine N(6)-methyltransferase family.

The catalysed reaction is adenosine(1779)/adenosine(1780) in 18S rRNA + 4 S-adenosyl-L-methionine = N(6)-dimethyladenosine(1779)/N(6)-dimethyladenosine(1780) in 18S rRNA + 4 S-adenosyl-L-homocysteine + 4 H(+). Functionally, specifically dimethylates two adjacent adenosines in the loop of a conserved hairpin near the 3'-end of 18S rRNA in the 40S particle. The protein is Dimethyladenosine transferase (DIM1) of Kluyveromyces lactis (strain ATCC 8585 / CBS 2359 / DSM 70799 / NBRC 1267 / NRRL Y-1140 / WM37) (Yeast).